The sequence spans 280 residues: MGQKINPHGFRLGITTEWKSRWYADKQYADYIKEDVAIRKLLATGLERAGIADVEIERTRDRVRVDIHTARPGIVIGRRGTEADRIRADLEKLTKKQVQLNILEVKNPESVAQLVAQGVAEQLSNRVAFRRAMRKAIQSAMRQPNVKGIRVQCSGRLGGAEMSRSEFYREGRVPLHTLRADIDYGLYEAKTTFGRIGVKVWIYKGDIVGGKRELTAAAPAADRPRRDRPSGTRPRRSGASGTTATSTDAGRAASEGTVEAPATEAAATAPSAGQPETTES.

The 69-residue stretch at 38-106 folds into the KH type-2 domain; it reads IRKLLATGLE…QVQLNILEVK (69 aa). The disordered stretch occupies residues 216-280; that stretch reads AAAPAADRPR…SAGQPETTES (65 aa). Low complexity predominate over residues 237–270; that stretch reads SGASGTTATSTDAGRAASEGTVEAPATEAAATAP.

Belongs to the universal ribosomal protein uS3 family. In terms of assembly, part of the 30S ribosomal subunit. Forms a tight complex with proteins S10 and S14.

Functionally, binds the lower part of the 30S subunit head. Binds mRNA in the 70S ribosome, positioning it for translation. This chain is Small ribosomal subunit protein uS3, found in Mycolicibacterium vanbaalenii (strain DSM 7251 / JCM 13017 / BCRC 16820 / KCTC 9966 / NRRL B-24157 / PYR-1) (Mycobacterium vanbaalenii).